The chain runs to 382 residues: Opsin Rh3 (382 aa).

The Extracellular portion of the chain corresponds to 1–56 (MEYHNVSSVLGNVSSVLRPDARLSAESRLLGWNVPPDELRHIPEHWLIYPEPPESM). Residue Asn-12 is glycosylated (N-linked (GlcNAc...) asparagine). Residues 57–81 (NYLLGTLYIFFTVISMIGNGLVMWV) traverse the membrane as a helical segment. The Cytoplasmic segment spans residues 82 to 93 (FSAAKSLRTPSN). A helical transmembrane segment spans residues 94–118 (ILVINLAFCDFMMMIKTPIFIYNSF). Topologically, residues 119 to 132 (HQGYALGHLGCQIF) are extracellular. Cys-129 and Cys-206 form a disulfide bridge. Residues 133–152 (GVIGSYTGIAAGATNAFIAY) form a helical membrane-spanning segment. The Cytoplasmic portion of the chain corresponds to 153-170 (DRYNVITRPMEGKMTHGK). Residues 171 to 195 (AIAMIIFIYLYATPWVVACYTESWG) traverse the membrane as a helical segment. The Extracellular segment spans residues 196–219 (RFVPEGYLTSCTFDYLTDNFDTRL). A helical membrane pass occupies residues 220-247 (FVACIFFFSFVCPTTMITYYYSQIVGHV). Residues 248 to 283 (FSHEKALRDQAKKMNVDSLRSNVDKSKEAAEIRIAK) are Cytoplasmic-facing. Residues 284–307 (AAITICFLFFASWTPYGVMSLIGA) traverse the membrane as a helical segment. The Extracellular portion of the chain corresponds to 308 to 315 (FGDKTLLT). A helical membrane pass occupies residues 316 to 340 (PGATMIPACTCKMVACIDPFVYAIS). N6-(retinylidene)lysine is present on Lys-327. The Cytoplasmic segment spans residues 341–382 (HPRYRMELQKRCPWLAISEKAPESAAAISTSTTQEQQQTTAA).

It belongs to the G-protein coupled receptor 1 family. Opsin subfamily. In terms of processing, phosphorylated on some or all of the serine and threonine residues present in the C-terminal region.

It is found in the membrane. Its function is as follows. Visual pigments are the light-absorbing molecules that mediate vision. They consist of an apoprotein, opsin, covalently linked to cis-retinal. In Drosophila pseudoobscura pseudoobscura (Fruit fly), this protein is Opsin Rh3 (Rh3).